We begin with the raw amino-acid sequence, 271 residues long: Urease accessory protein UreD (271 aa).

The protein belongs to the UreD family. In terms of assembly, ureD, UreF and UreG form a complex that acts as a GTP-hydrolysis-dependent molecular chaperone, activating the urease apoprotein by helping to assemble the nickel containing metallocenter of UreC. The UreE protein probably delivers the nickel.

Its subcellular location is the cytoplasm. In terms of biological role, required for maturation of urease via the functional incorporation of the urease nickel metallocenter. The sequence is that of Urease accessory protein UreD from Actinomyces naeslundii.